An 892-amino-acid chain; its full sequence is MTRRRSRPSGGAGRRERARAAGLQKPQAPEPQPPPPSLEAGAGAGPPEVPAELDCDGPREEEEPKLAPGPQVPPTSSQSVQTCCLLCHRERKGWEEGPSQNGLVLQGEKLPPDFMPKLVKNLLGEMPLWVCQSCRKSMEEEERQTGGDHAVAISLSHTSCKSQSCGGDSHSSSSSSSSSSSSSSSCHGNSGDWDPSSFLSAHKLSGLWNSPHSSGAVPGSSLGSPPAILGEAFPVSEHHQHSDLTAPPNSPTGPPPHPASLIPSHPGSFSSASYPPPLPTTPVAPFPAQASECPMAAATATHPSGPCQSPHPPSTSMPLLKMPPPLSGCSHPCSGHCSGHCGGPLLPPPSSQPLPSTHSRDPGCKGHKFAHSGLACEADEGLGEEEDSSSERSSCTSSSTHPRDGKFCDCCYCEFFGHNAPLAAPTSRNYTEIREKLRSRLTRRKEELPMKGGTLGGIPGEPAVDHRDVDELLEFINSTEPKVPNSARAAKRARHKLKKKEKEKARLATEALKQVNRVSGSQEPRPARERLLEWPDQELDRVNSFLSSRLQEIKSTVKDSLCASLSMCELSVESSGFKEGTVEAQTLTPSDLSGSSQKRPDINLDLSPLTLGSPQSHTLQAPSEPVPPWAERRDPHPPPWTEVRGPPPGIPENGLVRRLNTVPNLSRVIWVKTPKPGNPSSEESSKEVPSCKQELSEPVATGGKPKKSKRQGSQAKKTLASPAPWSPANLEASGAKSQVSSPKQPSKGSEPAKVGSGAEPGEGSPGSRPGPIQADSPKTDKKGSSWQNWPGGAKARTLEQESEQTPGPARPQSLSQGKGRSRRSRNKQEKSASSLDDVFLPKDLDGVEMDETDREVEYFKRFCLDSAKQTRQKVAVNWTNFSLKKTTPSTAQ.

Disordered regions lie at residues 1–78, 164–192, 237–321, and 379–403; these read MTRR…TSSQ, SCGGDSHSSSSSSSSSSSSSSSCHGNSGD, EHHQ…PLLK, and DEGLGEEEDSSSERSSCTSSSTHPR. The segment covering 28–37 has biased composition (pro residues); it reads APEPQPPPPS. The span at 56–65 shows a compositional bias: basic and acidic residues; that stretch reads DGPREEEEPK. Residues 169-185 are compositionally biased toward low complexity; sequence SHSSSSSSSSSSSSSSS. 3 stretches are compositionally biased toward pro residues: residues 248–258, 274–285, and 309–321; these read PNSPTGPPPHP, YPPPLPTTPVAP, and SPHPPSTSMPLLK. Acidic residues predominate over residues 379–388; sequence DEGLGEEEDS. Residues 391–400 show a composition bias toward low complexity; it reads ERSSCTSSST. The stretch at 485 to 517 forms a coiled coil; it reads NSARAAKRARHKLKKKEKEKARLATEALKQVNR. 2 stretches are compositionally biased toward polar residues: residues 587 to 597 and 610 to 621; these read LTPSDLSGSSQ and TLGSPQSHTLQA. Disordered stretches follow at residues 587 to 655 and 671 to 837; these read LTPS…ENGL and VKTP…SLDD. Residues 637-650 are compositionally biased toward pro residues; that stretch reads PPPWTEVRGPPPGI. Positions 736–757 are enriched in low complexity; that stretch reads KSQVSSPKQPSKGSEPAKVGSG. 3 positions are modified to phosphoserine: Ser-764, Ser-776, and Ser-882.

Belongs to the FAM193 family.

The protein resides in the cytoplasm. It is found in the nucleus. This is Protein FAM193B (Fam193b) from Mus musculus (Mouse).